The primary structure comprises 493 residues: 6-aminohexanoate-cyclic-dimer hydrolase (493 aa).

Active-site charge relay system residues include Lys72 and Ser150. Catalysis depends on Ser174, which acts as the Acyl-ester intermediate.

Belongs to the amidase family. Homodimer.

It carries out the reaction 1,8-diazacyclotetradecane-2,9-dione + H2O = N-(6-aminohexanoyl)-6-aminohexanoate. Its pathway is xenobiotic degradation; nylon-6 oligomer degradation. Functionally, catalyzes the hydrolysis of 6-aminohexanoic acid cyclic dimer (1,8-diazacyclotetradecane-2,9-dione) to form the linear dimer 6-aminohexanoyl-6-aminohexanoic acid. This is 6-aminohexanoate-cyclic-dimer hydrolase (nylA) from Pseudomonas sp. (strain NK87).